Consider the following 105-residue polypeptide: MTVSCSKVLLSLCLFLMLLKATHESNQQRTNFREFFEIQLAQETREINEKNNQPLNQQLPQLNRRKRLWRDEDRRTFCTTLCPCEDRRKRAAVTPPTRKVPCCCP.

The first 21 residues, 1–21 (MTVSCSKVLLSLCLFLMLLKA), serve as a signal peptide directing secretion.

The protein belongs to the scolopendra neurotoxin 10 family. Post-translationally, contains 3 disulfide bonds. As to expression, expressed by the venom gland.

The protein localises to the secreted. This Scolopendra subspinipes (Vietnamese centipede) protein is Putative neurotoxin 10.